We begin with the raw amino-acid sequence, 261 residues long: Ribosomal RNA large subunit methyltransferase E (261 aa).

Residues Gly81, Trp83, Asp104, Asp120, and Asp144 each coordinate S-adenosyl-L-methionine. Lys184 acts as the Proton acceptor in catalysis. The interval 233 to 261 is disordered; the sequence is GNALGHEVEDDGPMPHDPREDATADEDQD. Residues 245 to 254 are compositionally biased toward basic and acidic residues; it reads PMPHDPREDA.

Belongs to the class I-like SAM-binding methyltransferase superfamily. RNA methyltransferase RlmE family.

It localises to the cytoplasm. It catalyses the reaction uridine(2552) in 23S rRNA + S-adenosyl-L-methionine = 2'-O-methyluridine(2552) in 23S rRNA + S-adenosyl-L-homocysteine + H(+). In terms of biological role, specifically methylates the uridine in position 2552 of 23S rRNA at the 2'-O position of the ribose in the fully assembled 50S ribosomal subunit. The protein is Ribosomal RNA large subunit methyltransferase E of Allorhizobium ampelinum (strain ATCC BAA-846 / DSM 112012 / S4) (Agrobacterium vitis (strain S4)).